A 368-amino-acid chain; its full sequence is Left-right determination factor 1 (368 aa).

Residues Met1–Ala21 form the signal peptide. A propeptide spans Leu22–Lys76 (or 135). N-linked (GlcNAc...) asparagine glycosylation is present at Asn158. 4 cysteine pairs are disulfide-bonded: Cys253/Cys266, Cys265/Cys318, Cys295/Cys353, and Cys299/Cys355.

It belongs to the TGF-beta family. In terms of processing, the processing of the protein may also occur at the second R-X-X-R site located at AA 132-135. Processing appears to be regulated in a cell-type specific manner.

It localises to the secreted. Functionally, required for left-right axis determination as a regulator of LEFTY2 and NODAL. The protein is Left-right determination factor 1 (Lefty1) of Mus musculus (Mouse).